The primary structure comprises 557 residues: MRSDEIKKGIERAPHRSLLRACGLKEEDFGKPFIGIANSYIDIIPGHVHLQEFAKIVKEAIREAGGVPFEFNVIGVDDGIAMGHSGMFYSLPSRELIADSVETVVQAHKLDGLVLIPNCDKIVPGMIMAAARVNIPTILVSGGPMAAGHTSDGKPIDLATVFEAVGGIKKGLIDEKQLIDIETHACPTCGSCSGMFTANSMNCLAEALGIALPGNGSILAIDPRRKELAKQAGRQIVELVKAGLKFRDIVNQETIENAFTLDIAMGGSSNTVLHLLAISHEAGIEFPMEKIDEISRKTPTLCKLAPASQYHMEDLDKAGGIYAILKELSKKNLLHLDRPTVLMKTIGEAIKDAEIKDTNVIRPLENPYNETGGLAVLFGNLAPDGAVVKAAAVDPKILVHRGTAVVFDSEEEAIEGITNGKVKEGNVVVIRYEGPKGGPGMREMLAPTSTIMGMGLGDKVSLITDGRFSGATRGACIGHVSPEAAAGGPIGIVQNGDEILIDIPNRKIELLISEQEFERRMKEFKPKKKEIPSPWLRRYSKFVTSANKGAILSDECS.

Asp78 is a binding site for Mg(2+). Residue Cys119 coordinates [2Fe-2S] cluster. Residues Asp120 and Lys121 each coordinate Mg(2+). N6-carboxylysine is present on Lys121. [2Fe-2S] cluster is bound at residue Cys192. Glu443 provides a ligand contact to Mg(2+). The Proton acceptor role is filled by Ser469.

The protein belongs to the IlvD/Edd family. As to quaternary structure, homodimer. Requires [2Fe-2S] cluster as cofactor. Mg(2+) serves as cofactor.

The catalysed reaction is (2R)-2,3-dihydroxy-3-methylbutanoate = 3-methyl-2-oxobutanoate + H2O. It carries out the reaction (2R,3R)-2,3-dihydroxy-3-methylpentanoate = (S)-3-methyl-2-oxopentanoate + H2O. Its pathway is amino-acid biosynthesis; L-isoleucine biosynthesis; L-isoleucine from 2-oxobutanoate: step 3/4. It functions in the pathway amino-acid biosynthesis; L-valine biosynthesis; L-valine from pyruvate: step 3/4. Its function is as follows. Functions in the biosynthesis of branched-chain amino acids. Catalyzes the dehydration of (2R,3R)-2,3-dihydroxy-3-methylpentanoate (2,3-dihydroxy-3-methylvalerate) into 2-oxo-3-methylpentanoate (2-oxo-3-methylvalerate) and of (2R)-2,3-dihydroxy-3-methylbutanoate (2,3-dihydroxyisovalerate) into 2-oxo-3-methylbutanoate (2-oxoisovalerate), the penultimate precursor to L-isoleucine and L-valine, respectively. This chain is Dihydroxy-acid dehydratase, found in Sulfurihydrogenibium sp. (strain YO3AOP1).